Here is a 1320-residue protein sequence, read N- to C-terminus: Bifunctional protein PutA (1320 aa).

Residues 228 to 574 (LSRSLNRIIG…SFVNRIADAT (347 aa)) form a proline dehydrogenase region. The aldehyde dehydrogenase stretch occupies residues 653–1119 (QPVADGEMTP…LAHRPPNALN (467 aa)). Residues E883 and C917 contribute to the active site.

It in the N-terminal section; belongs to the proline dehydrogenase family. This sequence in the C-terminal section; belongs to the aldehyde dehydrogenase family. It depends on FAD as a cofactor.

The catalysed reaction is L-proline + a quinone = (S)-1-pyrroline-5-carboxylate + a quinol + H(+). It carries out the reaction L-glutamate 5-semialdehyde + NAD(+) + H2O = L-glutamate + NADH + 2 H(+). It participates in amino-acid degradation; L-proline degradation into L-glutamate; L-glutamate from L-proline: step 1/2. Its pathway is amino-acid degradation; L-proline degradation into L-glutamate; L-glutamate from L-proline: step 2/2. Oxidizes proline to glutamate for use as a carbon and nitrogen source and also function as a transcriptional repressor of the put operon. The polypeptide is Bifunctional protein PutA (putA) (Salmonella typhimurium (strain LT2 / SGSC1412 / ATCC 700720)).